The primary structure comprises 200 residues: Small ribosomal subunit protein eS1 (200 aa).

Belongs to the eukaryotic ribosomal protein eS1 family.

The chain is Small ribosomal subunit protein eS1 from Thermococcus sibiricus (strain DSM 12597 / MM 739).